The chain runs to 387 residues: Arrestin-C (387 aa).

The protein belongs to the arrestin family. In terms of tissue distribution, retina and pineal gland.

In terms of biological role, may play a role in an as yet undefined retina-specific signal transduction. Could bind to photoactivated-phosphorylated red/green opsins. The protein is Arrestin-C (arr3) of Xenopus laevis (African clawed frog).